The following is a 325-amino-acid chain: Probable cell division protein WhiA (325 aa).

Residues serine 273–asparagine 306 constitute a DNA-binding region (H-T-H motif).

The protein belongs to the WhiA family.

Its function is as follows. Involved in cell division and chromosome segregation. The protein is Probable cell division protein WhiA of Parafrankia sp. (strain EAN1pec).